A 351-amino-acid chain; its full sequence is Cytochrome c biogenesis protein CcsA (351 aa).

8 helical membrane passes run 17 to 37, 38 to 58, 68 to 88, 97 to 117, 143 to 163, 259 to 279, 286 to 306, and 320 to 340; these read VLFL…LPAI, NALG…LLGA, LSNL…VHLI, LVGV…TLTL, MMLS…FLVI, IIGL…VWAN, WSWD…AAYL, and AILA…VNLL.

Belongs to the CcmF/CycK/Ccl1/NrfE/CcsA family. As to quaternary structure, may interact with ccs1.

It is found in the cellular thylakoid membrane. Required during biogenesis of c-type cytochromes (cytochrome c6 and cytochrome f) at the step of heme attachment. This Nostoc sp. (strain PCC 7120 / SAG 25.82 / UTEX 2576) protein is Cytochrome c biogenesis protein CcsA.